The following is a 179-amino-acid chain: Guanosine-3',5'-bis(diphosphate) 3'-pyrophosphohydrolase MESH1 (179 aa).

G2 carries the post-translational modification N-acetylglycine. N6-acetyllysine is present on K25. The 96-residue stretch at 32-127 (YINHPIGVAR…VKLADKLYNL (96 aa)) folds into the HD domain. Mn(2+) contacts are provided by H35, H61, and D62. Residues E65 and D66 each act as nucleophile in the active site. An N6-acetyllysine modification is found at K97. Residue D122 participates in Mn(2+) binding. K123 carries the N6-acetyllysine modification.

It belongs to the MESH1 family. It depends on Mn(2+) as a cofactor.

The enzyme catalyses guanosine 3',5'-bis(diphosphate) + H2O = GDP + diphosphate + H(+). PpGpp hydrolyzing enzyme involved in starvation response. The polypeptide is Guanosine-3',5'-bis(diphosphate) 3'-pyrophosphohydrolase MESH1 (Hddc3) (Mus musculus (Mouse)).